The sequence spans 250 residues: Cell division protein ZapD (250 aa).

The protein belongs to the ZapD family. As to quaternary structure, interacts with FtsZ.

It localises to the cytoplasm. In terms of biological role, cell division factor that enhances FtsZ-ring assembly. Directly interacts with FtsZ and promotes bundling of FtsZ protofilaments, with a reduction in FtsZ GTPase activity. The chain is Cell division protein ZapD from Pectobacterium atrosepticum (strain SCRI 1043 / ATCC BAA-672) (Erwinia carotovora subsp. atroseptica).